A 606-amino-acid chain; its full sequence is Elongation factor 4 (606 aa).

The 183-residue stretch at 11–193 (DKIRNFSIVA…AIVTRLPPPK (183 aa)) folds into the tr-type G domain. GTP is bound by residues 23-28 (DHGKST) and 140-143 (NKVD).

This sequence belongs to the TRAFAC class translation factor GTPase superfamily. Classic translation factor GTPase family. LepA subfamily.

It is found in the cell inner membrane. It carries out the reaction GTP + H2O = GDP + phosphate + H(+). Its function is as follows. Required for accurate and efficient protein synthesis under certain stress conditions. May act as a fidelity factor of the translation reaction, by catalyzing a one-codon backward translocation of tRNAs on improperly translocated ribosomes. Back-translocation proceeds from a post-translocation (POST) complex to a pre-translocation (PRE) complex, thus giving elongation factor G a second chance to translocate the tRNAs correctly. Binds to ribosomes in a GTP-dependent manner. The chain is Elongation factor 4 from Caulobacter vibrioides (strain ATCC 19089 / CIP 103742 / CB 15) (Caulobacter crescentus).